The chain runs to 530 residues: Carbohydrate sulfotransferase 2 (530 aa).

Positions 1–20 are disordered; sequence MSRSSPRALPPGALPRPLPA. Topologically, residues 1–54 are cytoplasmic; that stretch reads MSRSSPRALPPGALPRPLPAAPAAVQRALLPPWPRRAGRRWPASPLGMKVFRRK. The span at 8-20 shows a compositional bias: pro residues; that stretch reads ALPPGALPRPLPA. Residues 55-75 form a helical; Signal-anchor for type II membrane protein membrane-spanning segment; the sequence is ALVLCAGYALLLVLTMLNLLD. Over 76–530 the chain is Lumenal; the sequence is YKWHKEPLQQ…SKTLLRKPRL (455 aa). The disordered stretch occupies residues 97–128; it reads GAAGAGWGRPGSPPAAPPRAHSRMDPRTPYRP. A 3'-phosphoadenylyl sulfate-binding site is contributed by 173–179; it reads WRSGSSF. N243 carries an N-linked (GlcNAc...) asparagine glycan. Position 332–340 (332–340) interacts with 3'-phosphoadenylyl sulfate; it reads RDPRAVASS. N-linked (GlcNAc...) asparagine glycans are attached at residues N457 and N475.

It belongs to the sulfotransferase 1 family. Gal/GlcNAc/GalNAc subfamily. In terms of assembly, homodimer; disulfide-linked. Homodimerization is not essential for enzyme activity. As to expression, in brain, it is expressed in pyramidal cells in the CA3 subregion of the hippocampus, cerebellar nucleus and Purkinje cells. Expressed in peripheral lymph nodes.

It is found in the golgi apparatus. The protein resides in the trans-Golgi network membrane. It carries out the reaction 3-O-{N-acetyl-beta-D-glucosaminyl-(1-&gt;3)-beta-D-galactosyl-(1-&gt;3)-N-acetyl-alpha-D-galactosaminyl}-L-threonyl-[protein] + 3'-phosphoadenylyl sulfate = 3-O-{6-O-sulfo-N-acetyl-beta-D-glucosaminyl-(1-&gt;3)-beta-D-galactosyl-(1-&gt;3)-N-acetyl-alpha-D-galactosaminyl}-L-threonyl-[protein] + adenosine 3',5'-bisphosphate + H(+). The enzyme catalyses 3-O-{N-acetyl-beta-D-glucosaminyl-(1-&gt;3)-beta-D-galactosyl-(1-&gt;3)-N-acetyl-alpha-D-galactosaminyl}-L-seryl-[protein] + 3'-phosphoadenylyl sulfate = 3-O-{6-O-sulfo-N-acetyl-beta-D-glucosaminyl-(1-&gt;3)-beta-D-galactosyl-(1-&gt;3)-N-acetyl-alpha-D-galactosaminyl}-L-seryl-[protein] + adenosine 3',5'-bisphosphate + H(+). The catalysed reaction is a 3-O-{beta-D-galactosyl-(1-&gt;3)-[N-acetyl-beta-D-glucosaminyl-(1-&gt;6)]-N-acetyl-alpha-D-galactosaminyl}-L-threonyl-[protein] + 3'-phosphoadenylyl sulfate = 3-O-{beta-D-galactosyl-(1-&gt;3)-[6-O-sulfo-N-acetyl-beta-D-glucosaminyl-(1-&gt;6)]-N-acetyl-alpha-D-galactosaminyl}-L-threonyl-[protein] + adenosine 3',5'-bisphosphate + H(+). It catalyses the reaction 3-O-{beta-D-galactosyl-(1-&gt;3)-[N-acetyl-beta-D-glucosaminyl-(1-&gt;6)]-N-acetyl-alpha-D-galactosaminyl}-L-seryl-[protein] + 3'-phosphoadenylyl sulfate = 3-O-{beta-D-galactosyl-(1-&gt;3)-[6-O-sulfo-N-acetyl-beta-D-glucosaminyl-(1-&gt;6)]-N-acetyl-alpha-D-galactosaminyl}-L-seryl-[protein] + adenosine 3',5'-bisphosphate + H(+). It participates in protein modification; carbohydrate sulfation. Functionally, sulfotransferase that utilizes 3'-phospho-5'-adenylyl sulfate (PAPS) as sulfonate donor to catalyze the transfer of sulfate to position 6 of non-reducing N-acetylglucosamine (GlcNAc) residues within keratan-like structures on N-linked glycans and within mucin-associated glycans that can ultimately serve as SELL ligands. SELL ligands are present in high endothelial cells (HEVs) and play a central role in lymphocyte homing at sites of inflammation. Participates in biosynthesis of the SELL ligand sialyl 6-sulfo Lewis X and in lymphocyte homing to Peyer patches. Has no activity toward O-linked sugars. Its substrate specificity may be influenced by its subcellular location. Sulfates GlcNAc residues at terminal, non-reducing ends of oligosaccharide chains. This chain is Carbohydrate sulfotransferase 2 (Chst2), found in Mus musculus (Mouse).